A 247-amino-acid chain; its full sequence is Sugar fermentation stimulation protein homolog (247 aa).

It belongs to the SfsA family.

In Oleidesulfovibrio alaskensis (strain ATCC BAA-1058 / DSM 17464 / G20) (Desulfovibrio alaskensis), this protein is Sugar fermentation stimulation protein homolog.